The chain runs to 354 residues: Isopentenyl-diphosphate delta-isomerase (354 aa).

Residue arginine 6–lysine 7 participates in substrate binding. Residues alanine 63–threonine 65, serine 93, and asparagine 122 contribute to the FMN site. Serine 93–arginine 95 lines the substrate pocket. Glutamine 160 serves as a coordination point for substrate. A Mg(2+)-binding site is contributed by glutamate 161. Residues lysine 192, threonine 221, glycine 273–arginine 275, and serine 294–glutamine 295 contribute to the FMN site.

It belongs to the IPP isomerase type 2 family. In terms of assembly, homooctamer. Dimer of tetramers. FMN is required as a cofactor. It depends on NADPH as a cofactor. The cofactor is Mg(2+).

The protein localises to the cytoplasm. The catalysed reaction is isopentenyl diphosphate = dimethylallyl diphosphate. Functionally, involved in the biosynthesis of isoprenoids. Catalyzes the 1,3-allylic rearrangement of the homoallylic substrate isopentenyl (IPP) to its allylic isomer, dimethylallyl diphosphate (DMAPP). The chain is Isopentenyl-diphosphate delta-isomerase from Pyrobaculum islandicum (strain DSM 4184 / JCM 9189 / GEO3).